Here is a 181-residue protein sequence, read N- to C-terminus: Ribonuclease HII (181 aa).

The RNase H type-2 domain maps to Met1–Ile181. Residues Asp6, Glu7, and Asp98 each contribute to the a divalent metal cation site.

Belongs to the RNase HII family. Requires Mn(2+) as cofactor. Mg(2+) serves as cofactor.

It is found in the cytoplasm. It carries out the reaction Endonucleolytic cleavage to 5'-phosphomonoester.. Endonuclease that specifically degrades the RNA of RNA-DNA hybrids. The chain is Ribonuclease HII from Borrelia duttonii (strain Ly).